Reading from the N-terminus, the 579-residue chain is Mitogen-activated protein kinase kinase kinase 7 (579 aa).

The interaction with MAPK8IP1 stretch occupies residues 1 to 300; the sequence is MSTASAASSS…FPGADEPLQY (300 aa). One can recognise a Protein kinase domain in the interval 36–291; that stretch reads IEVEEVVGRG…KIMTHLMRYF (256 aa). Residues 42-50 and K63 contribute to the ATP site; that span reads VGRGAFGVV. K72 is covalently cross-linked (Glycyl lysine isopeptide (Lys-Gly) (interchain with G-Cter in ubiquitin)). Residue D156 is the Proton acceptor of the active site. Residue K158 forms a Glycyl lysine isopeptide (Lys-Gly) (interchain with G-Cter in ubiquitin) linkage. Phosphothreonine; by autocatalysis is present on residues T184 and T187. S192 is subject to Phosphoserine; by autocatalysis. A Glycyl lysine isopeptide (Lys-Gly) (interchain with G-Cter in ubiquitin) cross-link involves residue K209. Disordered stretches follow at residues 301 to 338 and 354 to 391; these read PCQYSDEGQSNSATSTGSFMDIASTNTSNKSDTNMEQV and KNQAKQQSESGRLSLGASRGSSVESLPPTSEGKRMSAD. Polar residues predominate over residues 306–338; sequence DEGQSNSATSTGSFMDIASTNTSNKSDTNMEQV. Low complexity predominate over residues 361 to 375; it reads SESGRLSLGASRGSS. S367, S389, and S412 each carry phosphoserine. Residues 416-425 show a composition bias toward polar residues; that stretch reads LTVTGTEPGQ. Residues 416–466 are disordered; sequence LTVTGTEPGQVSSRSSSPSVRMITTSGPTSEKPARSHPWTPDDSTDTNGSD. Low complexity predominate over residues 426-436; that stretch reads VSSRSSSPSVR. A Phosphoserine modification is found at S428.

The protein belongs to the protein kinase superfamily. STE Ser/Thr protein kinase family. MAP kinase kinase kinase subfamily. In terms of assembly, can form homodimer. Binds both upstream activators and downstream substrates in multimolecular complexes. Interacts with TAB1/MAP3K7IP1, TAB2/MAP3K7IP2 and TAB3/MAP3K7IP3. Identified in the TRIKA2 complex composed of MAP3K7/TAK1, TAB1/MAP3K7IP1 and TAB2/MAP3K7IP2. Interacts with PPM1L and PPM1B/PP2CB. Interaction with PP2A and PPP6C leads to its repressed activity. Interacts with TRAF6 and TAB1/MAP3K7IP1; during IL-1 signaling. Interacts with TAOK1 and TAOK2; interaction with TAOK2 interferes with MAP3K7 interaction with IKKA, thus preventing NF-kappa-B activation. Interacts with DYNC2I2 (via WD domains). Interacts with CYLD and RBCK1. Interacts with TGFBR1; induces MAP3K7/TAK1 activation by TRAF6. Interacts with MAPK8IP1 and SMAD6. Interacts with isoform 1 of VRK2. Interacts with DAB2; the interaction is induced by TGF-beta stimulation and may mediate TGF-beta stimulated JNK activation. Interacts with TRIM5. Part of a complex containing ITCH, NDFIP1 and MAP3K7. Interacts with PLEKHM1 (via N- and C-terminus). Interacts with TRIM8. Found in a complex with SH3RF1, RAC2, MAP2K7/MKK7, MAPK8IP1/JIP1, MAPK8/JNK1 and MAPK9/JNK2. Interacts with SASH1. Interacts with RIPK1. It depends on Mg(2+) as a cofactor. In terms of processing, association with TAB1/MAP3K7IP1 promotes autophosphorylation and subsequent activation. Association with TAB2/MAP3K7IP2, itself associated with free unanchored Lys-63 polyubiquitin chain, promotes autophosphorylation and subsequent activation of MAP3K7. Dephosphorylation at Thr-187 by PP2A and PPP6C leads to inactivation. 'Lys-48'-linked polyubiquitination at Lys-72 is induced by TNFalpha, and leads to proteasomal degradation. Undergoes 'Lys-48'-linked polyubiquitination catalyzed by ITCH. 'Lys-63'-linked polyubiquitination at Lys-158 by TRIM8 does not lead to proteasomal degradation but contributes to autophosphorylation and activation. Deubiquitinated by CYLD, a protease that selectively cleaves 'Lys-63'-linked ubiquitin chains.Deubiquitinated by USP19; leading to negative regulation of TNF-alpha- and IL-1beta-triggered NF-kappa-B activation.

The protein localises to the cytoplasm. It is found in the cell membrane. It carries out the reaction L-seryl-[protein] + ATP = O-phospho-L-seryl-[protein] + ADP + H(+). The enzyme catalyses L-threonyl-[protein] + ATP = O-phospho-L-threonyl-[protein] + ADP + H(+). With respect to regulation, activated by pro-inflammatory cytokines and in response to physical and chemical stresses, including osmotic stress, oxidative stress, arsenic and ultraviolet light irradiation. Activated by 'Lys-63'-linked polyubiquitination and by autophosphorylation. Association with TAB1/MAP3K7IP1 and TAB2/MAP3K7IP2 promotes activation through autophosphorylation, whereas PPM1B/PP2CB, PP2A and PPP6C dephosphorylation leads to inactivation. Ceramides are also able to activate MAP3K7/TAK1. In terms of biological role, serine/threonine kinase which acts as an essential component of the MAP kinase signal transduction pathway. Plays an important role in the cascades of cellular responses evoked by changes in the environment. Mediates signal transduction of TRAF6, various cytokines including interleukin-1 (IL-1), transforming growth factor-beta (TGFB), TGFB-related factors like BMP2 and BMP4, toll-like receptors (TLR), tumor necrosis factor receptor CD40 and B-cell receptor (BCR). Once activated, acts as an upstream activator of the MKK/JNK signal transduction cascade and the p38 MAPK signal transduction cascade through the phosphorylation and activation of several MAP kinase kinases like MAP2K1/MEK1, MAP2K3/MKK3, MAP2K6/MKK6 and MAP2K7/MKK7. These MAP2Ks in turn activate p38 MAPKs and c-jun N-terminal kinases (JNKs); both p38 MAPK and JNK pathways control the transcription factors activator protein-1 (AP-1). Independently of MAP2Ks and p38 MAPKs, acts as a key activator of NF-kappa-B by promoting activation of the I-kappa-B-kinase (IKK) core complex. Mechanistically, recruited to polyubiquitin chains of RIPK2 and IKBKG/NEMO via TAB2/MAP3K7IP2 and TAB3/MAP3K7IP3, and catalyzes phosphorylation and activation of IKBKB/IKKB component of the IKK complex, leading to NF-kappa-B activation. In osmotic stress signaling, plays a major role in the activation of MAPK8/JNK1, but not that of NF-kappa-B. Promotes TRIM5 capsid-specific restriction activity. Phosphorylates RIPK1 at 'Ser-321' which positively regulates RIPK1 interaction with RIPK3 to promote necroptosis but negatively regulates RIPK1 kinase activity and its interaction with FADD to mediate apoptosis. Phosphorylates STING1 in response to cGAMP-activation, promoting association between STEEP1 and STING1 and STING1 translocation to COPII vesicles. In Mus musculus (Mouse), this protein is Mitogen-activated protein kinase kinase kinase 7 (Map3k7).